The following is a 211-amino-acid chain: Adenylyl-sulfate kinase (211 aa).

Gly-36–Ser-43 serves as a coordination point for ATP. The active-site Phosphoserine intermediate is Ser-110.

Belongs to the APS kinase family.

It carries out the reaction adenosine 5'-phosphosulfate + ATP = 3'-phosphoadenylyl sulfate + ADP + H(+). It participates in sulfur metabolism; hydrogen sulfide biosynthesis; sulfite from sulfate: step 2/3. Its function is as follows. Catalyzes the synthesis of activated sulfate. In Buchnera aphidicola subsp. Schizaphis graminum (strain Sg), this protein is Adenylyl-sulfate kinase (cysC).